The following is a 152-amino-acid chain: Ribosome maturation factor RimP (152 aa).

It belongs to the RimP family.

The protein localises to the cytoplasm. Its function is as follows. Required for maturation of 30S ribosomal subunits. This is Ribosome maturation factor RimP from Erwinia tasmaniensis (strain DSM 17950 / CFBP 7177 / CIP 109463 / NCPPB 4357 / Et1/99).